Here is an 826-residue protein sequence, read N- to C-terminus: 1,4-alpha-glucan-branching enzyme 1, chloroplastic/amyloplastic (826 aa).

The transit peptide at 1 to 58 (ATTTTTTHNSKNKQYLAKQKPVELTLGYQNPNGCKVCSFGSKGSIYQKVSSGFKGVSV) directs the protein to the chloroplast. Asp409 functions as the Nucleophile in the catalytic mechanism. Glu464 serves as the catalytic Proton donor. The tract at residues 782–813 (DTDVARIPDVSMESEDSNLDRIEDNSEDAVDA) is disordered.

This sequence belongs to the glycosyl hydrolase 13 family. GlgB subfamily. Monomer. As to expression, expressed in roots, leaves, stipules, pods and flowers.

The protein resides in the plastid. It is found in the chloroplast. The protein localises to the amyloplast. The catalysed reaction is Transfers a segment of a (1-&gt;4)-alpha-D-glucan chain to a primary hydroxy group in a similar glucan chain.. Its pathway is glycan biosynthesis; starch biosynthesis. Its function is as follows. Catalyzes the formation of the alpha-1,6-glucosidic linkages in starch by scission of a 1,4-alpha-linked oligosaccharide from growing alpha-1,4-glucan chains and the subsequent attachment of the oligosaccharide to the alpha-1,6 position. May preferentially transfer long chains during branching. In Pisum sativum (Garden pea), this protein is 1,4-alpha-glucan-branching enzyme 1, chloroplastic/amyloplastic (SBEII).